A 337-amino-acid polypeptide reads, in one-letter code: Ornithine carbamoyltransferase (337 aa).

Carbamoyl phosphate is bound by residues 56-59 (STRT), glutamine 83, arginine 107, and 134-137 (HPTQ). Residues asparagine 168, aspartate 232, and 236-237 (SM) each bind L-ornithine. Carbamoyl phosphate contacts are provided by residues 274–275 (CL) and arginine 320.

It belongs to the aspartate/ornithine carbamoyltransferase superfamily. OTCase family.

It localises to the cytoplasm. The catalysed reaction is carbamoyl phosphate + L-ornithine = L-citrulline + phosphate + H(+). It functions in the pathway amino-acid biosynthesis; L-arginine biosynthesis; L-arginine from L-ornithine and carbamoyl phosphate: step 1/3. In terms of biological role, reversibly catalyzes the transfer of the carbamoyl group from carbamoyl phosphate (CP) to the N(epsilon) atom of ornithine (ORN) to produce L-citrulline. The protein is Ornithine carbamoyltransferase (argI) of Shigella flexneri.